Consider the following 278-residue polypeptide: Elongation factor Ts (278 aa).

The segment at 82 to 85 (TDFV) is involved in Mg(2+) ion dislocation from EF-Tu.

The protein belongs to the EF-Ts family.

The protein localises to the cytoplasm. Its function is as follows. Associates with the EF-Tu.GDP complex and induces the exchange of GDP to GTP. It remains bound to the aminoacyl-tRNA.EF-Tu.GTP complex up to the GTP hydrolysis stage on the ribosome. In Streptomyces coelicolor (strain ATCC BAA-471 / A3(2) / M145), this protein is Elongation factor Ts (tsf).